The primary structure comprises 319 residues: MDWTAIKVITSSEAVEAVSYILTDMGAQGVQIEDAADFANLHEGKYGDHGEFIDPSSIPHRKNGAAVSGYFPQNVFVPELLPTIHQRVAKLREYGLNPGENDVSAATVDNQQWATVWQKYYHPLRVTDQLTIVPQWEEYQPADPKEKLIFLDPGMAFGTGTHPTTRLMLEALEKTIVGNEYVIDVGTGSGVLSIAAKHLGAGKVDAYDIDEVAVNSAKKNLALNPVAKDVKVGINSLLDGIHTKADLIVANILAEIIVPLIPQAYENLKPGGKFLVSGIIDDKAPLIRQKLQEQGFIIDDEQQMKDWHGMIAHKPTEVK.

Residues Thr-165, Gly-186, Asp-208, and Asn-251 each contribute to the S-adenosyl-L-methionine site.

The protein belongs to the methyltransferase superfamily. PrmA family.

Its subcellular location is the cytoplasm. The enzyme catalyses L-lysyl-[protein] + 3 S-adenosyl-L-methionine = N(6),N(6),N(6)-trimethyl-L-lysyl-[protein] + 3 S-adenosyl-L-homocysteine + 3 H(+). Its function is as follows. Methylates ribosomal protein L11. In Limosilactobacillus reuteri subsp. reuteri (strain JCM 1112) (Lactobacillus reuteri), this protein is Ribosomal protein L11 methyltransferase.